Consider the following 276-residue polypeptide: RNA-binding protein pno-1 (276 aa).

Disordered regions lie at residues 1 to 30 and 62 to 101; these read MATS…VPST and DVVM…SRVV. Over residues 8 to 27 the composition is skewed to acidic residues; the sequence is FDDEFPMEEGMPELLDDEDV. The KH domain maps to 197 to 249; sequence GDHVSRAIGRIAGKDGRTKLVIENTTKTRIVVANTKIHILGAYQNLKLARNAV.

It belongs to the PNO1 family. As to quaternary structure, part of the small subunit (SSU) processome, composed of more than 70 proteins and the RNA chaperone small nucleolar RNA (snoRNA) U3.

It localises to the nucleus. It is found in the nucleolus. Functionally, part of the small subunit (SSU) processome, first precursor of the small eukaryotic ribosomal subunit. During the assembly of the SSU processome in the nucleolus, many ribosome biogenesis factors, an RNA chaperone and ribosomal proteins associate with the nascent pre-rRNA and work in concert to generate RNA folding, modifications, rearrangements and cleavage as well as targeted degradation of pre-ribosomal RNA by the RNA exosome. Positively regulates dimethylation of two adjacent adenosines in the loop of a conserved hairpin near the 3'-end of 18S rRNA. The chain is RNA-binding protein pno-1 from Caenorhabditis briggsae.